The primary structure comprises 248 residues: PF03932 family protein CutC (248 aa).

Belongs to the CutC family. As to quaternary structure, homodimer.

The protein localises to the cytoplasm. The chain is PF03932 family protein CutC from Escherichia coli O139:H28 (strain E24377A / ETEC).